The sequence spans 167 residues: uncharacterized protein (167 aa).

The protein to A.thaliana At2g20940.

This is an uncharacterized protein from Schizosaccharomyces pombe (strain 972 / ATCC 24843) (Fission yeast).